The primary structure comprises 242 residues: Large ribosomal subunit protein uL3 (242 aa).

Residues 131-165 are disordered; the sequence is GRATHGNSVSHRTHGSTGQRQDPGKVFKGKKMAGH. A compositionally biased stretch (polar residues) spans 135-150; the sequence is HGNSVSHRTHGSTGQR. Gln151 is modified (N5-methylglutamine).

The protein belongs to the universal ribosomal protein uL3 family. As to quaternary structure, part of the 50S ribosomal subunit. Forms a cluster with proteins L14 and L19. Post-translationally, methylated by PrmB.

In terms of biological role, one of the primary rRNA binding proteins, it binds directly near the 3'-end of the 23S rRNA, where it nucleates assembly of the 50S subunit. The polypeptide is Large ribosomal subunit protein uL3 (Chelativorans sp. (strain BNC1)).